A 184-amino-acid polypeptide reads, in one-letter code: Photosystem I assembly protein Ycf4 (184 aa).

Transmembrane regions (helical) follow at residues 21–43 (NYFW…VSSY) and 63–85 (GIVM…FTIF).

This sequence belongs to the Ycf4 family.

The protein localises to the plastid. The protein resides in the chloroplast thylakoid membrane. Seems to be required for the assembly of the photosystem I complex. The polypeptide is Photosystem I assembly protein Ycf4 (Chaetosphaeridium globosum (Charophycean green alga)).